Consider the following 384-residue polypeptide: Protein NDRG1 (384 aa).

Ser-2 carries the N-acetylserine modification. Residues Ser-2, Ser-319, and Ser-326 each carry the phosphoserine modification. Positions Arg-325–Cys-384 are disordered. Positions Arg-327 to Ser-336 are enriched in polar residues. Residue Thr-328 is modified to Phosphothreonine; by SGK1. A phosphoserine; by SGK1 mark is found at Ser-330 and Ser-332. Position 333 is a phosphoserine (Ser-333). Thr-335 carries the phosphothreonine modification. A phosphoserine mark is found at Ser-336 and Ser-342. 2 consecutive repeat copies span residues Gly-339–Glu-348 and Gly-349–Glu-358. Residues Gly-339–Glu-358 form a 2 X 10 AA tandem repeats of G-[PST]-R-S-R-S-H-T-S-E region. The segment covering His-345–Arg-361 has biased composition (basic and acidic residues). Thr-346 bears the Phosphothreonine; by SGK1 mark. At Ser-352 the chain carries Phosphoserine. Thr-356 carries the post-translational modification Phosphothreonine; by SGK1. Over residues Ser-374–Cys-384 the composition is skewed to low complexity.

It belongs to the NDRG family. As to quaternary structure, interacts with RAB4A (membrane-bound form); the interaction involves NDRG1 in vesicular recycling of CDH1. Interacts with APOA1, APOA2, PRA1 and RTN1. Post-translationally, under stress conditions, phosphorylated in the C-terminal on many serine and threonine residues. Phosphorylated in vitro by PKA. Phosphorylation enhanced by increased intracellular cAMP levels. Homocysteine induces dephosphorylation. Phosphorylation by SGK1 is cell cycle dependent.

It is found in the cytoplasm. The protein resides in the cytosol. Its subcellular location is the cytoskeleton. The protein localises to the microtubule organizing center. It localises to the centrosome. It is found in the nucleus. The protein resides in the cell membrane. Stress-responsive protein involved in hormone responses, cell growth, and differentiation. Acts as a tumor suppressor in many cell types. Necessary but not sufficient for p53/TP53-mediated caspase activation and apoptosis. Has a role in cell trafficking notably of the Schwann cell and is necessary for the maintenance and development of the peripheral nerve myelin sheath. Required for vesicular recycling of CDH1 and TF. May also function in lipid trafficking. Protects cells from spindle disruption damage. Functions in p53/TP53-dependent mitotic spindle checkpoint. Regulates microtubule dynamics and maintains euploidy. This chain is Protein NDRG1 (NDRG1), found in Bos taurus (Bovine).